Consider the following 348-residue polypeptide: Actin maturation protease (348 aa).

The segment covering 1–18 (MISPCSPPLEPPVPPPET) has biased composition (pro residues). A disordered region spans residues 1 to 64 (MISPCSPPLE…LPPPPRTTGF (64 aa)). Over residues 34–48 (NLPELAFPPSSFQAS) the composition is skewed to low complexity. Residues 49–60 (VPPPPPLPPPPR) show a composition bias toward pro residues. The interval 121–241 (SLIQEGPQCG…WAVSAGVLLG (121 aa)) is peptidase C39-like. Residue Cys129 is part of the active site. Phosphoserine is present on Ser313.

It belongs to the ACTMAP family. In terms of assembly, interacts (via N-terminus) with PFN2; the interaction may facilitate efficient cleavage of the acetylated N-terminus of immature actin. Interacts with PFN1.

The protein localises to the cytoplasm. It catalyses the reaction N-terminal N(alpha)-acetyl-L-methionyl-L-aspartyl-[protein] + H2O = N-terminal L-aspartyl-[protein] + N-acetyl-L-methionine. It carries out the reaction N-terminal N(alpha)-acetyl-L-methionyl-L-glutamyl-[protein] + H2O = N-terminal L-glutamyl-[protein] + N-acetyl-L-methionine. The enzyme catalyses N-terminal N(alpha)-acetyl-L-cysteinyl-L-aspartyl-[protein] + H2O = N-terminal L-aspartyl-[protein] + N-acetyl-L-cysteine. The catalysed reaction is N-terminal N(alpha)-acetyl-L-cysteinyl-L-glutamyl-[protein] + H2O = N-terminal L-glutamyl-[protein] + N-acetyl-L-cysteine. Actin maturation protease that specifically mediates the cleavage of immature acetylated N-terminal actin, thereby contributing to actin maturation. Cleaves N-terminal acetylated methionine of immature cytoplasmic beta- and gamma-actins ACTB and ACTG1 after translation. Cleaves N-terminal acetylated cysteine of muscle alpha-actins ACTA1, ACTC1 and ACTA2 after canonical removal of N-terminal methionine. The protein is Actin maturation protease of Bos taurus (Bovine).